The sequence spans 324 residues: Beta-ketoacyl-[acyl-carrier-protein] synthase III (324 aa).

Catalysis depends on residues Cys112 and His251. Residues 252–256 (QANIR) are ACP-binding. The active site involves Asn281.

The protein belongs to the thiolase-like superfamily. FabH family. As to quaternary structure, homodimer.

The protein localises to the cytoplasm. It carries out the reaction malonyl-[ACP] + acetyl-CoA + H(+) = 3-oxobutanoyl-[ACP] + CO2 + CoA. It participates in lipid metabolism; fatty acid biosynthesis. Its function is as follows. Catalyzes the condensation reaction of fatty acid synthesis by the addition to an acyl acceptor of two carbons from malonyl-ACP. Catalyzes the first condensation reaction which initiates fatty acid synthesis and may therefore play a role in governing the total rate of fatty acid production. Possesses both acetoacetyl-ACP synthase and acetyl transacylase activities. Its substrate specificity determines the biosynthesis of branched-chain and/or straight-chain of fatty acids. This is Beta-ketoacyl-[acyl-carrier-protein] synthase III from Desulfotalea psychrophila (strain LSv54 / DSM 12343).